Reading from the N-terminus, the 429-residue chain is UDP-N-acetylglucosamine 1-carboxyvinyltransferase (429 aa).

22-23 contributes to the phosphoenolpyruvate binding site; that stretch reads KN. Residue Arg-102 coordinates UDP-N-acetyl-alpha-D-glucosamine. Cys-126 (proton donor) is an active-site residue. Cys-126 is subject to 2-(S-cysteinyl)pyruvic acid O-phosphothioketal. UDP-N-acetyl-alpha-D-glucosamine contacts are provided by residues 171–174, Asp-316, and Ile-338; that span reads KVSV.

This sequence belongs to the EPSP synthase family. MurA subfamily.

It localises to the cytoplasm. The enzyme catalyses phosphoenolpyruvate + UDP-N-acetyl-alpha-D-glucosamine = UDP-N-acetyl-3-O-(1-carboxyvinyl)-alpha-D-glucosamine + phosphate. It participates in cell wall biogenesis; peptidoglycan biosynthesis. In terms of biological role, cell wall formation. Adds enolpyruvyl to UDP-N-acetylglucosamine. The chain is UDP-N-acetylglucosamine 1-carboxyvinyltransferase from Xanthobacter autotrophicus (strain ATCC BAA-1158 / Py2).